Here is a 447-residue protein sequence, read N- to C-terminus: Tubulin beta chain (447 aa).

GTP-binding residues include Gln11, Glu69, Ser138, Gly142, Thr143, Gly144, Asn204, and Asn226. Residue Glu69 coordinates Mg(2+).

The protein belongs to the tubulin family. Dimer of alpha and beta chains. A typical microtubule is a hollow water-filled tube with an outer diameter of 25 nm and an inner diameter of 15 nM. Alpha-beta heterodimers associate head-to-tail to form protofilaments running lengthwise along the microtubule wall with the beta-tubulin subunit facing the microtubule plus end conferring a structural polarity. Microtubules usually have 13 protofilaments but different protofilament numbers can be found in some organisms and specialized cells. Requires Mg(2+) as cofactor.

The protein localises to the cytoplasm. It is found in the cytoskeleton. Functionally, tubulin is the major constituent of microtubules, a cylinder consisting of laterally associated linear protofilaments composed of alpha- and beta-tubulin heterodimers. Microtubules grow by the addition of GTP-tubulin dimers to the microtubule end, where a stabilizing cap forms. Below the cap, tubulin dimers are in GDP-bound state, owing to GTPase activity of alpha-tubulin. The polypeptide is Tubulin beta chain (Trichophyton rubrum (Athlete's foot fungus)).